We begin with the raw amino-acid sequence, 294 residues long: NAD kinase (294 aa).

D74 functions as the Proton acceptor in the catalytic mechanism. Residues 74–75 (DG), 148–149 (NE), H159, R176, D178, 189–194 (TAYSLS), and Q249 contribute to the NAD(+) site.

This sequence belongs to the NAD kinase family. The cofactor is a divalent metal cation.

The protein resides in the cytoplasm. The catalysed reaction is NAD(+) + ATP = ADP + NADP(+) + H(+). Functionally, involved in the regulation of the intracellular balance of NAD and NADP, and is a key enzyme in the biosynthesis of NADP. Catalyzes specifically the phosphorylation on 2'-hydroxyl of the adenosine moiety of NAD to yield NADP. This Vibrio parahaemolyticus serotype O3:K6 (strain RIMD 2210633) protein is NAD kinase.